We begin with the raw amino-acid sequence, 80 residues long: Protein transport protein SSS1 (80 aa).

At 1–46 (MARASEKGEEKKQSNNQVEKLVEAPVEFVREGTQFLAKCKKPDLKE) the chain is on the cytoplasmic side. A helical membrane pass occupies residues 47–75 (YTKIVKAVGIGFIAVGIIGYAIKLIHIPI). The Extracellular segment spans residues 76-80 (RYVIV).

The protein belongs to the SecE/SEC61-gamma family. As to quaternary structure, component of the heterotrimeric Sec61 complex, which is composed of SSH1, SBH1 and SSS1. Presumably three to four Sec61 heterotrimers assemble into an oligomeric ring with a central aqueous pore. In cotranslational ER import, the pore diameter varies from 9-15 A in a ribosome-free resting state to 40-60 A in a functional state when associated with the ribosome. The Sec61 complex is part of a channel-forming translocon complex whose composition seem to change dependent upon different functional states. During post-translational ER import the Sec61 complex associates with the Sec62/63 complex to form the Sec complex. SSH1 is a component of the heterotrimeric Ssh1 complex, which is composed of SSH1, SBH2 and SSS1. SSS1 interacts with OST1, OST4, SWP1 and WBP1, components of the OT complex.

Its subcellular location is the endoplasmic reticulum membrane. Functionally, part of the Sec61 complex, which is the major component of channel-forming translocon complex that mediates protein translocation across the endoplasmic reticulum (ER). The functional states of the translocon complex include co- and post-translational ER import, cotranslational membrane protein integration and retrograde transport of misfolded proteins out of the ER. In the cotranslational pathway, ribosomes synthesizing presecretory proteins are targeted to the translocon by the cytosolic signal recognition particle (SRP) and its ER-localized receptor. The association of the Sec61 complex with the ribosome is mediated by the 28S rRNA of the large ribosomal subunit. SRP-independent post-translational translocation requires the association of additional factors, such as the Sec62/63 complex and KAR2. Also part of the Ssh1 complex, which probably is the major component of a channel-forming translocon complex that may function exclusively in the cotranslational pathway of protein ER import. The chain is Protein transport protein SSS1 (SSS1) from Saccharomyces cerevisiae (strain ATCC 204508 / S288c) (Baker's yeast).